A 130-amino-acid polypeptide reads, in one-letter code: Small ribosomal subunit protein uS11c (130 aa).

Belongs to the universal ribosomal protein uS11 family. In terms of assembly, part of the 30S ribosomal subunit.

The protein localises to the plastid. It localises to the chloroplast. This is Small ribosomal subunit protein uS11c from Chlorokybus atmophyticus (Soil alga).